Reading from the N-terminus, the 962-residue chain is Protease 3 (962 aa).

Positions 1-23 (MPRSTWFKALLLLVALWAPLSQA) are cleaved as a signal peptide. His-88 is a Zn(2+) binding site. Glu-91 acts as the Proton acceptor in catalysis. Zn(2+)-binding residues include His-92 and Glu-169.

Belongs to the peptidase M16 family. In terms of assembly, monomer. Zn(2+) serves as cofactor.

Its subcellular location is the periplasm. The enzyme catalyses Preferential cleavage of 16-Tyr-|-Leu-17 and 25-Phe-|-Tyr-26 bonds of oxidized insulin B chain. Also acts on other substrates of Mw less than 7 kDa such as insulin and glucagon.. Functionally, endopeptidase that degrades small peptides of less than 7 kDa, such as glucagon and insulin. The chain is Protease 3 (ptrA) from Escherichia coli O157:H7.